A 461-amino-acid polypeptide reads, in one-letter code: MPMLKIYNSITRQKQEFKPINPGKIGMYVCGVTIYDLCHIGHGRTFVSFDMIVRYLRYVGYEVNFQRNITDVDDKIIKRANENNESCEALTERLIGEMHRDFDALNMLRPDFEPRATLHIAEIIDMVELLLARGHAYVASDGDVLFSVASYPDYGRLSGQNLDQLQAGARVEVDENKQNPMDFVLWKMSKPGEPTWESPWGPGRPGWHIECSAMNSKHLGLHFDIHGGGSDLQFPHHENEIAQSCCAHDTPYVNYWMHTGMVMVDREKMSKSLGNFFTIRDVLGHYDAETVRYFLLSGHYRSQLNYSEDNLKQARSALERLYTAIKDVDLTVAAAPAEEFIVKFKAAMDDDFNTPEAYSVLFDMVRDINRLKATDIAKASALAVAMKQLADVLGLLGQDPDAFFKGEGSDDEVAEIEALIVERNRARSEKDWAAADVARNRLDILGVVLEDGPSGTTWRKK.

Zn(2+) is bound at residue C30. The 'HIGH' region signature appears at 32–42; that stretch reads VTIYDLCHIGH. Residues C211, H236, and E240 each coordinate Zn(2+). Positions 268-272 match the 'KMSKS' region motif; it reads KMSKS. K271 is an ATP binding site.

Belongs to the class-I aminoacyl-tRNA synthetase family. As to quaternary structure, monomer. The cofactor is Zn(2+).

The protein resides in the cytoplasm. It carries out the reaction tRNA(Cys) + L-cysteine + ATP = L-cysteinyl-tRNA(Cys) + AMP + diphosphate. The chain is Cysteine--tRNA ligase from Shewanella putrefaciens (strain CN-32 / ATCC BAA-453).